Here is a 495-residue protein sequence, read N- to C-terminus: Aspartyl/glutamyl-tRNA(Asn/Gln) amidotransferase subunit B (495 aa).

Belongs to the GatB/GatE family. GatB subfamily. As to quaternary structure, heterotrimer of A, B and C subunits.

It catalyses the reaction L-glutamyl-tRNA(Gln) + L-glutamine + ATP + H2O = L-glutaminyl-tRNA(Gln) + L-glutamate + ADP + phosphate + H(+). The enzyme catalyses L-aspartyl-tRNA(Asn) + L-glutamine + ATP + H2O = L-asparaginyl-tRNA(Asn) + L-glutamate + ADP + phosphate + 2 H(+). Functionally, allows the formation of correctly charged Asn-tRNA(Asn) or Gln-tRNA(Gln) through the transamidation of misacylated Asp-tRNA(Asn) or Glu-tRNA(Gln) in organisms which lack either or both of asparaginyl-tRNA or glutaminyl-tRNA synthetases. The reaction takes place in the presence of glutamine and ATP through an activated phospho-Asp-tRNA(Asn) or phospho-Glu-tRNA(Gln). This chain is Aspartyl/glutamyl-tRNA(Asn/Gln) amidotransferase subunit B, found in Methanosarcina acetivorans (strain ATCC 35395 / DSM 2834 / JCM 12185 / C2A).